We begin with the raw amino-acid sequence, 496 residues long: E1B 55 kDa protein (496 aa).

The interval 1 to 74 (MERRNPSERG…EPESRPGPSG (74 aa)) is disordered. The span at 45–61 (GGAAAAAGGSQAAAAGA) shows a compositional bias: low complexity. 2 positions are modified to phosphoserine: Ser-490 and Ser-491. A Phosphothreonine modification is found at Thr-495.

This sequence belongs to the adenoviridae E1B 55 kDa protein family. In terms of assembly, interacts with host PML-4 and PML-5; this interaction promotes efficient subnuclear targeting of E1B-55K to PML nuclear bodies. Interacts with E4-ORF3 protein. Interacts with E4-ORF6 protein. Post-translationally, phosphorylation at the C-terminus affects the subcellular location.

It localises to the host nucleus. Its subcellular location is the host cytoplasm. Functionally, plays a major role to prevent cellular inhibition of viral genome replication. Assembles an SCF-like E3 ubiquitin ligase complex based on the cellular proteins ELOB, ELOC, CUL5 and RBX1, in cooperation with viral E4orf6. This viral RING-type ligase ubiquitinates cellular substrates and targets them to proteasomal degradation: TP53/p53, LIG4, MRE11-RAD50-NBS1 (MRN) complex, ITGA3, DAXX and BLM. E1B-55K probably acts as the substrate-specific adapter of the SCF-like E3 ubiquitin ligase complex. Degradation of host TP53/p53 activity is essential for preventing E1A-induced TP53 accumulation that would otherwise lead to cell apoptosis and growth arrest. E1B-55K also inactivates TP53 transcription-factor activity by binding its transactivation domain. E1B-55K also functions as a SUMO1 E3 ligase for TP53 which causes the latter to be sequestered in promyelocytic leukemia (PML) nuclear bodies thereby contributing to maximal inhibition of TP53 function. In Homo sapiens (Human), this protein is E1B 55 kDa protein.